The sequence spans 730 residues: MSRRDQMVKKIKDLMYKPDYIRNIGIVAHIDHGKTTLSDNLLAAAGMISSELAGDQRFLDFDEQEQERGITIDAANVSMVHSYEDNEYLINLIDTPGHVDFGGDVTRAMRAVDGAVVVVCAVEGVMPQTETVLRQALKENVRPVLFINKVDRLINELKLDDAELQNRFVKIIAGVNKLIKNMAPEQYKTEWQVKIEDGTVAFGSAYHNWAINVPEMLKTNITFKDIIQYCNEDNQKELAQKIKIEEVILGMVVEHLPSPKVAQEYRVPKIWSGDIESVEGQGMIATDSTSPLAVMVTDVSIDKHAGEIATGRVYGGSIEKGSEIFFVGSMSKARTQQVGVYMGPERINTDSVPAGNIVAITGARGAIAGETITDADHNIAPFESLEHISEPVVTVAVEAKNTKDLPKLIEVLRQVGKEDPTLRVEINEETGEHLIAGMGELHLEVIIYRINDKGLEVETSEPIVVYRETIAGTATNVEGKSPNKHNRFYIDIEPLSDDLMNAISEGEIPEGRVKGKELAKTFQEHGLDKDEAKKVWDVYKHSIFVNKTRGIQYLDEIKELLMEGFESALDDGPLANEKAMGIKISLMDAKIHEDAVHRGPAQVLPAIRKAVYGAIMLAQPTLMEPMQKVYISVPQDYMGAATREVQNRRGQIVEMGQEGDMSTIESKVPVSEMFGFAGDIRSAAEGRCIWSTENSGFERIPRELQNKIVKEIRERKGLTPEPYGPDHYLG.

The region spanning 19-229 (DYIRNIGIVA…NITFKDIIQY (211 aa)) is the tr-type G domain. GTP is bound by residues 28 to 35 (AHIDHGKT), 94 to 98 (DTPGH), and 148 to 151 (NKVD). His597 is subject to Diphthamide.

It belongs to the TRAFAC class translation factor GTPase superfamily. Classic translation factor GTPase family. EF-G/EF-2 subfamily.

Its subcellular location is the cytoplasm. Functionally, catalyzes the GTP-dependent ribosomal translocation step during translation elongation. During this step, the ribosome changes from the pre-translocational (PRE) to the post-translocational (POST) state as the newly formed A-site-bound peptidyl-tRNA and P-site-bound deacylated tRNA move to the P and E sites, respectively. Catalyzes the coordinated movement of the two tRNA molecules, the mRNA and conformational changes in the ribosome. This is Elongation factor 2 from Methanosphaera stadtmanae (strain ATCC 43021 / DSM 3091 / JCM 11832 / MCB-3).